The chain runs to 388 residues: Putative 8-amino-7-oxononanoate synthase (388 aa).

Residue Arg23 participates in substrate binding. 110 to 111 (GY) is a pyridoxal 5'-phosphate binding site. Residue His135 coordinates substrate. Residues Ser182, 207-210 (DDAH), and 238-241 (TLSK) each bind pyridoxal 5'-phosphate. The residue at position 241 (Lys241) is an N6-(pyridoxal phosphate)lysine. Thr355 provides a ligand contact to substrate.

The protein belongs to the class-II pyridoxal-phosphate-dependent aminotransferase family. BioF subfamily. In terms of assembly, homodimer. Pyridoxal 5'-phosphate is required as a cofactor.

The enzyme catalyses 6-carboxyhexanoyl-[ACP] + L-alanine + H(+) = (8S)-8-amino-7-oxononanoate + holo-[ACP] + CO2. Its pathway is cofactor biosynthesis; biotin biosynthesis. In terms of biological role, catalyzes the decarboxylative condensation of pimeloyl-[acyl-carrier protein] and L-alanine to produce 8-amino-7-oxononanoate (AON), [acyl-carrier protein], and carbon dioxide. This chain is Putative 8-amino-7-oxononanoate synthase (bioF), found in Thermodesulfovibrio yellowstonii (strain ATCC 51303 / DSM 11347 / YP87).